A 182-amino-acid polypeptide reads, in one-letter code: Adenine phosphoribosyltransferase (182 aa).

This sequence belongs to the purine/pyrimidine phosphoribosyltransferase family. In terms of assembly, homodimer.

The protein localises to the cytoplasm. It carries out the reaction AMP + diphosphate = 5-phospho-alpha-D-ribose 1-diphosphate + adenine. Its pathway is purine metabolism; AMP biosynthesis via salvage pathway; AMP from adenine: step 1/1. Catalyzes a salvage reaction resulting in the formation of AMP, that is energically less costly than de novo synthesis. The polypeptide is Adenine phosphoribosyltransferase (Campylobacter concisus (strain 13826)).